The following is an 87-amino-acid chain: UPF0250 protein NE1487 (87 aa).

It belongs to the UPF0250 family.

This Nitrosomonas europaea (strain ATCC 19718 / CIP 103999 / KCTC 2705 / NBRC 14298) protein is UPF0250 protein NE1487.